An 852-amino-acid polypeptide reads, in one-letter code: Bifunctional heparan sulfate N-deacetylase/N-sulfotransferase 1 (852 aa).

Residues 1 to 13 are Cytoplasmic-facing; the sequence is MIITPYLNRKITR. Residues 14–34 traverse the membrane as a helical; Signal-anchor for type II membrane protein segment; sequence PLKWILALIFLYLIYICLFSN. The tract at residues 34 to 574 is heparan sulfate N-deacetylase 1; sequence NNSKPPKPRK…PRHHAILPPS (541 aa). The Lumenal portion of the chain corresponds to 35-852; that stretch reads NSKPPKPRKK…WLEESVRIRA (818 aa). 7 N-linked (GlcNAc...) asparagine glycosylation sites follow: asparagine 50, asparagine 72, asparagine 261, asparagine 328, asparagine 377, asparagine 428, and asparagine 576. The interval 575 to 852 is heparan sulfate N-sulfotransferase 1; the sequence is INCTKKSLPD…WLEESVRIRA (278 aa). The active-site For sulfotransferase activity is the lysine 592. 592-596 contacts 3'-phosphoadenylyl sulfate; the sequence is KTGST. The N-linked (GlcNAc...) asparagine glycan is linked to asparagine 607. Serine 686 contacts 3'-phosphoadenylyl sulfate. The N-linked (GlcNAc...) asparagine glycan is linked to asparagine 712. Residues cysteine 789 and cysteine 798 are joined by a disulfide bond. 803–807 is a binding site for 3'-phosphoadenylyl sulfate; that stretch reads KGRKY.

The protein belongs to the sulfotransferase 1 family. NDST subfamily. In terms of assembly, monomer. In terms of tissue distribution, present in some specific neurons in head and tail regions and muscles.

The protein localises to the golgi apparatus membrane. It carries out the reaction alpha-D-glucosaminyl-[heparan sulfate](n) + 3'-phosphoadenylyl sulfate = N-sulfo-alpha-D-glucosaminyl-[heparan sulfate](n) + adenosine 3',5'-bisphosphate + 2 H(+). It functions in the pathway glycan metabolism; heparan sulfate biosynthesis. The protein operates within glycan metabolism; heparin biosynthesis. Functionally, essential bifunctional enzyme that catalyzes both the N-deacetylation and the N-sulfation of glucosamine (GlcNAc) of the glycosaminoglycan in heparan sulfate. Modifies the GlcNAc-GlcA disaccharide repeating sugar backbone to make N-sulfated heparosan, a prerequisite substrate for later modifications in heparin biosynthesis. In Caenorhabditis elegans, this protein is Bifunctional heparan sulfate N-deacetylase/N-sulfotransferase 1 (hst-1).